The primary structure comprises 60 residues: Cytotoxin 7 (60 aa).

4 disulfides stabilise this stretch: Cys3-Cys21, Cys14-Cys38, Cys42-Cys53, and Cys54-Cys59.

Belongs to the three-finger toxin family. Short-chain subfamily. Type IA cytotoxin sub-subfamily. Monomer in solution; Homodimer and oligomer in the presence of negatively charged lipids forming a pore with a size ranging between 20 and 30 Angstroms. As to expression, expressed by the venom gland.

It is found in the secreted. It localises to the target cell membrane. Shows cytolytic activity on many different cells by forming pore in lipid membranes. In vivo, increases heart rate or kills the animal by cardiac arrest. In addition, it binds to heparin with high affinity, interacts with Kv channel-interacting protein 1 (KCNIP1) in a calcium-independent manner, and binds to integrin alpha-V/beta-3 (ITGAV/ITGB3) with moderate affinity. Preferentially binds acidic phospholipids like phosphatidylserine, phosphatidic acid and phosphatidyl glycerol. Has hemolytic activity towards human erythrocytes (EC(50)=0.171 uM) and cytolytic activity towards various cell lines. In Naja naja (Indian cobra), this protein is Cytotoxin 7.